Consider the following 156-residue polypeptide: MTIHHDLRPTLNLIRLANGEGLDLPAYESKGAAGMDLRAAVDEAAPLTLQPGKRALVPTGFIFEIPEGFEGQVRPRSGLAFKHGITCLNSPGTVDSDYRGEVKVLLANLGDEAFTVERGMRIAQMVIAPVTQMRVAESAAASETTRGAGGFGSTGV.

Substrate is bound by residues 76–78, Asn-89, 93–95, and Lys-103; these read RSG and TVD.

It belongs to the dUTPase family. Mg(2+) is required as a cofactor.

The enzyme catalyses dUTP + H2O = dUMP + diphosphate + H(+). It functions in the pathway pyrimidine metabolism; dUMP biosynthesis; dUMP from dCTP (dUTP route): step 2/2. Functionally, this enzyme is involved in nucleotide metabolism: it produces dUMP, the immediate precursor of thymidine nucleotides and it decreases the intracellular concentration of dUTP so that uracil cannot be incorporated into DNA. The sequence is that of Deoxyuridine 5'-triphosphate nucleotidohydrolase from Rhizobium leguminosarum bv. trifolii (strain WSM2304).